A 790-amino-acid chain; its full sequence is Protein sel-1 homolog 1 (790 aa).

The signal sequence occupies residues 1–21 (MQVRVRLSLLLLCAVLLGSAA). The segment at 22–51 (ATSDDKTNQDDSLDSKSSLPTDESVKDHTT) is disordered. At 22–734 (ATSDDKTNQD…LFTQLDMDQL (713 aa)) the chain is on the lumenal side. The interval 23 to 733 (TSDDKTNQDD…DLFTQLDMDQ (711 aa)) is interaction with ERLEC1, OS9 and SYVN1. A Phosphoserine modification is found at Ser-64. The segment covering 67–78 (AEVESLLQDEED) has biased composition (acidic residues). The disordered stretch occupies residues 67–98 (AEVESLLQDEEDSSKTQEEEISFLESPNPSSK). The 49-residue stretch at 118-166 (AHGEPCHFPFLFLDKEYDECTSDGREDGRLWCATTYDYKTDEKWGFCET) folds into the Fibronectin type-II domain. Cystine bridges form between Cys-123/Cys-149 and Cys-137/Cys-164. 9 Sel1-like repeats span residues 179–214 (AEMIYQAGMKILNGSNRKSQKREAYRYLQKAAGMNH), 215–250 (TKALERVSYALLFGDYLTQNIQAAKEMFEKLTEEGS), 251–286 (PKGQTGLGFLYASGLGVNSSQAKALVYYTFGALGGN), 287–322 (LIAHMILGYRYWAGIGVLQSCESALTHYRLVANHVA), 369–405 (VQAQVGLGQLHLHGGRGVEQNHQRAFDYFNLAANAGN), 406–442 (SHAMAFLGKMYSEGSDIVPQSNETALHYFKKAADMGN), 443–478 (PVGQSGLGMAYLYGRGVQVNYDLALKYFQKAAEQGW), 479–514 (VDGQLQLGSMYYNGIGVKRDYKQALKYFNLASQGGH), and 515–550 (ILAFYNLAQMHASGTGVMRSCHTAVELFKNVCERGR). N-linked (GlcNAc...) asparagine glycosylation is found at Asn-191 and Asn-213. Residue Asn-268 is glycosylated (N-linked (GlcNAc...) asparagine). Residues 348 to 533 (NSGMLEEDLI…MHASGTGVMR (186 aa)) are important for homodimerization and oligomerization. An N-linked (GlcNAc...) asparagine glycan is attached at Asn-427. The N-linked (GlcNAc...) asparagine glycan is linked to Asn-604. Sel1-like repeat units lie at residues 623 to 658 (TVARIKLGDYHFYGFGTDVDYETAFIHYRLASEQQH) and 660 to 695 (AQAMFNLGYMHEKGLGIKQDIHLAKRFYDMAAEASP). Residues 639–719 (TDVDYETAFI…VVYFLQYIRE (81 aa)) form an interaction with SYVN1 region. The segment at 734–790 (LLGPEWDLYLMTIIALLLGTVIAYRQRQHQDIPVPRPPGPRPAPPQQEGPPEQQPPQ) is mediates retention in the endoplasmic reticulum. A helical transmembrane segment spans residues 735–755 (LGPEWDLYLMTIIALLLGTVI). The Cytoplasmic portion of the chain corresponds to 756–790 (AYRQRQHQDIPVPRPPGPRPAPPQQEGPPEQQPPQ). Residues 763-790 (QDIPVPRPPGPRPAPPQQEGPPEQQPPQ) are disordered. Over residues 767-790 (VPRPPGPRPAPPQQEGPPEQQPPQ) the composition is skewed to pro residues.

It belongs to the sel-1 family. As to quaternary structure, homodimer and homooligomer. May form a complex with ERLEC1, HSPA5, OS9, and SYVN1. Interacts with FOXRED2 and EDEM1. Interacts with LPL and LMF1; may stabilize the complex formed by LPL and LMF1 and thereby promote the export of LPL dimers. Component of the HRD1 complex, which comprises at least SYNV1/HRD1, DERL1/2, FAM8A1, HERPUD1/HERP, OS9, SEL1L and UBE2J1. SYNV1 assembles with SEL1L and FAM8A1 through its transmembrane domains, but interaction with its cytoplasmic domain is required to confer stability to FAM8A1 and enhance recruitment of HERPUD1. The interaction with SYNV1/HRD1 is direct. In terms of processing, N-glycosylated. In terms of tissue distribution, highly expressed in pancreas, white adipose tissue, liver and spleen (at protein level). Detected in heart, brain, spleen, lung, liver, kidney and testis.

Its subcellular location is the endoplasmic reticulum membrane. Functionally, plays a role in the endoplasmic reticulum quality control (ERQC) system also called ER-associated degradation (ERAD) involved in ubiquitin-dependent degradation of misfolded endoplasmic reticulum proteins. Enhances SYVN1 stability. Plays a role in LPL maturation and secretion. Required for normal differentiation of the pancreas epithelium, and for normal exocrine function and survival of pancreatic cells. May play a role in Notch signaling. The polypeptide is Protein sel-1 homolog 1 (Sel1l) (Mus musculus (Mouse)).